Consider the following 314-residue polypeptide: MDKKSRVLIVGGTGFIGKRIVKASLALGHPTYVLFRPEALSYIDKVQMLISFKQLGAKLLEASLDDHQGLVDVVKQVDVVISAVSGGLVRHHILDQLKLVEAIKEAGNIKRFLPSEFGMDPDVVEDPLEPGNITFIDKRKVRRAIEAATIPYTYVSSNMFAGFFAGSLAQLQDAPRMMPARDKVLIYGDGNVKGVYVDEDDAGIYIVKSIDDPRTLNKTVYIRPPMNILSQKEVVEIWERLSGLSLEKIYVSEDQLLNMKDKSYVEKMARCHLYHFFIKGDLYNFEIGPNATEGTKLYPEVKYTTMDSYMERYL.

NADP(+)-binding positions include 11-17 (GGTGFIG), arginine 36, and lysine 45. Lysine 138 functions as the Proton acceptor in the catalytic mechanism. Arginine 142 lines the NADP(+) pocket. Histidine 272 is a binding site for substrate.

It belongs to the NmrA-type oxidoreductase family. Isoflavone reductase subfamily. In terms of assembly, dimer.

The enzyme catalyses (-)-lariciresinol + NADP(+) = (-)-pinoresinol + NADPH + H(+). It carries out the reaction (+)-secoisolariciresinol + NADP(+) = (-)-lariciresinol + NADPH + H(+). Functionally, reductase involved in lignan biosynthesis. Catalyzes the enantioselective sequential conversion of (-)-pinoresinol into (-)-lariciresinol and of (-)-lariciresinol into (+)-secoisolariciresinol. Abstracts the 4R-hydride from the NADPH cofactor during catalysis. The protein is Bifunctional pinoresinol-lariciresinol reductase 3 of Thuja plicata (Western red-cedar).